The chain runs to 694 residues: DNA-binding protein RFX2 (694 aa).

The segment at residues 174–249 (HLQWLLDNYE…YHYYGIRLKP (76 aa)) is a DNA-binding region (RFX-type winged-helix). Disordered stretches follow at residues 268 to 309 (QPIH…SQHH) and 659 to 694 (DDVSELGSDNDGDPRISGQPPVKRERVDLNHSMQEM). The segment covering 288-299 (NTANSSQHTSPE) has biased composition (polar residues). The segment covering 300 to 309 (QSVAAQSQHH) has biased composition (low complexity).

This sequence belongs to the RFX family. In terms of assembly, homodimer. Heterodimer; heterodimerizes with other rfx proteins.

It is found in the nucleus. The protein localises to the cytoplasm. Functionally, transcription factor that acts as a key regulator of ciliogenesis. Specifically regulates expression of genes required for cilium assembly and function. Recognizes and binds the X-box, a regulatory motif with DNA sequence 5'-GTNRCC(0-3N)RGYAAC-3' present on promoters. Required for neural tube closure and neural ciliogenesis. The chain is DNA-binding protein RFX2 (rfx2) from Xenopus tropicalis (Western clawed frog).